Here is a 328-residue protein sequence, read N- to C-terminus: Serine protease 27 (328 aa).

Residues 1-22 form the signal peptide; it reads MRQPHIAALLLLPLLLRSGTEG. Positions 23 to 37 are cleaved as a propeptide — activation peptide; it reads ARTLRACGHPKMFNR. The region spanning 38-280 is the Peptidase S1 domain; sequence MVGGENALEG…HHKWIHQIIP (243 aa). A disulfide bridge links C63 with C79. The Charge relay system role is filled by H78. N-linked (GlcNAc...) asparagine glycosylation occurs at N82. D127 (charge relay system) is an active-site residue. 3 disulfide bridges follow: C161–C238, C194–C217, and C228–C256. S232 serves as the catalytic Charge relay system.

Belongs to the peptidase S1 family.

It localises to the secreted. This Mus musculus (Mouse) protein is Serine protease 27 (Prss27).